The chain runs to 203 residues: MIAFVSGPVAALAPDSAVVEVGGIGIAVQCTPNTLSGLRMGREAKLATSLVVREDSLTLYGFVDDDERQVFELLQTASGVGPRLAQAMLAVHTPDALRRAVSTGDEKALVAVPGIGKKGAQKLLLELKDRLGEPLGTGGPAIGRAVTTGWREQLHAALIGLGYATREADEAVAAVAPQAEAAGGTPQVGQLLKAALQTLNRTR.

Residues 1–63 (MIAFVSGPVA…EDSLTLYGFV (63 aa)) form a domain I region. The interval 64–141 (DDDERQVFEL…GEPLGTGGPA (78 aa)) is domain II. Residues 141-145 (AIGRA) are flexible linker. Positions 146-203 (VTTGWREQLHAALIGLGYATREADEAVAAVAPQAEAAGGTPQVGQLLKAALQTLNRTR) are domain III.

Belongs to the RuvA family. As to quaternary structure, homotetramer. Forms an RuvA(8)-RuvB(12)-Holliday junction (HJ) complex. HJ DNA is sandwiched between 2 RuvA tetramers; dsDNA enters through RuvA and exits via RuvB. An RuvB hexamer assembles on each DNA strand where it exits the tetramer. Each RuvB hexamer is contacted by two RuvA subunits (via domain III) on 2 adjacent RuvB subunits; this complex drives branch migration. In the full resolvosome a probable DNA-RuvA(4)-RuvB(12)-RuvC(2) complex forms which resolves the HJ.

Its subcellular location is the cytoplasm. Functionally, the RuvA-RuvB-RuvC complex processes Holliday junction (HJ) DNA during genetic recombination and DNA repair, while the RuvA-RuvB complex plays an important role in the rescue of blocked DNA replication forks via replication fork reversal (RFR). RuvA specifically binds to HJ cruciform DNA, conferring on it an open structure. The RuvB hexamer acts as an ATP-dependent pump, pulling dsDNA into and through the RuvAB complex. HJ branch migration allows RuvC to scan DNA until it finds its consensus sequence, where it cleaves and resolves the cruciform DNA. In Streptomyces avermitilis (strain ATCC 31267 / DSM 46492 / JCM 5070 / NBRC 14893 / NCIMB 12804 / NRRL 8165 / MA-4680), this protein is Holliday junction branch migration complex subunit RuvA.